The primary structure comprises 328 residues: Ribose-phosphate pyrophosphokinase (328 aa).

Residues 39–41 (DGE) and 98–99 (RQ) contribute to the ATP site. Mg(2+) contacts are provided by H132 and D172. K195 is an active-site residue. D-ribose 5-phosphate-binding positions include R197, D221, and 225 to 229 (DTGGT).

Belongs to the ribose-phosphate pyrophosphokinase family. Class I subfamily. In terms of assembly, homohexamer. The cofactor is Mg(2+).

It is found in the cytoplasm. It catalyses the reaction D-ribose 5-phosphate + ATP = 5-phospho-alpha-D-ribose 1-diphosphate + AMP + H(+). It participates in metabolic intermediate biosynthesis; 5-phospho-alpha-D-ribose 1-diphosphate biosynthesis; 5-phospho-alpha-D-ribose 1-diphosphate from D-ribose 5-phosphate (route I): step 1/1. In terms of biological role, involved in the biosynthesis of the central metabolite phospho-alpha-D-ribosyl-1-pyrophosphate (PRPP) via the transfer of pyrophosphoryl group from ATP to 1-hydroxyl of ribose-5-phosphate (Rib-5-P). The sequence is that of Ribose-phosphate pyrophosphokinase from Mycoplasma pneumoniae (strain ATCC 29342 / M129 / Subtype 1) (Mycoplasmoides pneumoniae).